We begin with the raw amino-acid sequence, 57 residues long: MFSWKKVLFKGVIAVLSLFVFAVAVFFVGMALLTLDPKDRCLDYGGRYDDATKICEK.

The helical transmembrane segment at 12–34 threads the bilayer; sequence VIAVLSLFVFAVAVFFVGMALLT.

The protein localises to the membrane. This is an uncharacterized protein from Pasteurella multocida (strain Pm70).